The following is a 93-amino-acid chain: Phosphoribosyl-ATP pyrophosphatase (93 aa).

It belongs to the PRA-PH family.

It localises to the cytoplasm. It carries out the reaction 1-(5-phospho-beta-D-ribosyl)-ATP + H2O = 1-(5-phospho-beta-D-ribosyl)-5'-AMP + diphosphate + H(+). It functions in the pathway amino-acid biosynthesis; L-histidine biosynthesis; L-histidine from 5-phospho-alpha-D-ribose 1-diphosphate: step 2/9. The sequence is that of Phosphoribosyl-ATP pyrophosphatase from Mycobacterium leprae (strain Br4923).